Reading from the N-terminus, the 268-residue chain is Nitrite transporter NirC (268 aa).

Residues 1–25 (MFTDTINKCAANAARIARLSANNPL) are Cytoplasmic-facing. A helical transmembrane segment spans residues 26–46 (GFWVSSAMAGAYVGLGIILIF). The Periplasmic segment spans residues 47-59 (TLGNLLDPSVRPL). The helical transmembrane segment at 60-80 (VMGATFGIALTLVIIAGSELF) threads the bilayer. At 81–112 (TGHTMFLTFGVKAGSISHGQMWAILPQTWLGN) the chain is on the cytoplasmic side. The helical transmembrane segment at 113 to 133 (LVGSVFVAMLYSWGGGSLLPV) threads the bilayer. Residues 134–151 (DTSIVHSVALAKTTAPAM) lie on the Periplasmic side of the membrane. A helical transmembrane segment spans residues 152 to 172 (VLFFKGALCNWLVCLAIWMAL). The Cytoplasmic segment spans residues 173 to 179 (RTEGAAK). A helical membrane pass occupies residues 180–200 (FIAIWWCLLAFIASGYEHSIA). At 201 to 225 (NMTLFALSWFGNHSEAYTLAGIGHN) the chain is on the periplasmic side. The helical transmembrane segment at 226–246 (LLWVTLGNTLSGAVFMGLGYW) threads the bilayer. Topologically, residues 247-268 (YATPKANRPVADKFNQTETAAG) are cytoplasmic.

Belongs to the FNT transporter (TC 1.A.16) family.

The protein resides in the cell inner membrane. Functionally, catalyzes nitrite uptake and nitrite export across the cytoplasmic membrane. Is up to 10-fold more active than NarK or NarU in nitrite uptake for subsequent reduction in the cytoplasm by the NirB/NirD nitrite reductase. This Escherichia coli (strain K12) protein is Nitrite transporter NirC (nirC).